Reading from the N-terminus, the 222-residue chain is Acyl-protein thioesterase 1 homolog 2 (222 aa).

Catalysis depends on charge relay system residues Ser116, Asp169, and His202.

The protein belongs to the AB hydrolase superfamily. AB hydrolase 2 family.

The protein resides in the cytoplasm. It is found in the nucleus. It carries out the reaction S-hexadecanoyl-L-cysteinyl-[protein] + H2O = L-cysteinyl-[protein] + hexadecanoate + H(+). Its function is as follows. Hydrolyzes fatty acids from S-acylated cysteine residues in proteins with a strong preference for palmitoylated G-alpha proteins over other acyl substrates. Mediates the deacylation of G-alpha proteins such as GPA1 in vivo, but has weak or no activity toward palmitoylated Ras proteins. Has weak lysophospholipase activity in vitro; however such activity may not exist in vivo. The protein is Acyl-protein thioesterase 1 homolog 2 of Dictyostelium discoideum (Social amoeba).